The sequence spans 125 residues: Classical arabinogalactan protein 27 (125 aa).

Residues 1 to 21 (MASSILLTLITFIFLSSLSLS) form the signal peptide. A compositionally biased stretch (low complexity) spans 20-36 (LSSPTTNTIPSSQTISP). Positions 20 to 95 (LSSPTTNTIP…ASPPASSLAS (76 aa)) are disordered. The segment covering 53-66 (AVSSTQTIPSSSTL) has biased composition (polar residues). A compositionally biased stretch (low complexity) spans 77–95 (DPDPAFAPSASPPASSLAS). Ser98 is lipidated: GPI-anchor amidated serine. Positions 99–125 (QAPGVFIYFVFAAVYCFSLRLLAVSAI) are cleaved as a propeptide — removed in mature form.

Belongs to the classical AGP family. Post-translationally, O-glycosylated on the hydroxyproline residues.

It localises to the cell membrane. Its function is as follows. Proteoglycan that seems to be implicated in diverse developmental roles such as differentiation, cell-cell recognition, embryogenesis and programmed cell death. The sequence is that of Classical arabinogalactan protein 27 (AGP27) from Arabidopsis thaliana (Mouse-ear cress).